Reading from the N-terminus, the 316-residue chain is Apolipoprotein E (316 aa).

The signal sequence occupies residues 1–18 (MKVLWVALVVALLAGCQA). Tandem repeats lie at residues 79–100 (VLME…GQLA), 101–122 (PMAQ…ARLG), 123–144 (SDME…AMLG), 145–166 (QSTE…KRLL), 167–188 (RDAD…EGAE), 189–210 (RSVS…SRAA), 211–232 (TLST…QKLH), and 233–254 (GRLE…QQLE). Positions 79 to 254 (VLMEETMKEV…RLDKMRQQLE (176 aa)) are 8 X 22 AA approximate tandem repeats. Met-142 bears the Methionine sulfoxide mark. Ser-146 is subject to Phosphoserine. The interval 157 to 167 (HLRKLRKRLLR) is LDL and other lipoprotein receptors binding. Residue 161–164 (LRKR) participates in heparin binding. The tract at residues 209–289 (AATLSTQVGQ…SWFEPLVEDM (81 aa)) is lipid-binding and lipoprotein association. A heparin-binding site is contributed by 228–235 (RQKLHGRL). A homooligomerization region spans residues 265 to 316 (SQIRLQAEAFQARLRSWFEPLVEDMQRQWAGLVEKVQLALHLSPTSPPSENH). A specificity for association with VLDL region spans residues 277–289 (RLRSWFEPLVEDM).

Belongs to the apolipoprotein A1/A4/E family. As to quaternary structure, homotetramer. May interact with ABCA1; functionally associated with ABCA1 in the biogenesis of HDLs. May interact with APP/A4 amyloid-beta peptide; the interaction is extremely stable in vitro but its physiological significance is unclear. May interact with MAPT. May interact with MAP2. In the cerebrospinal fluid, interacts with secreted SORL1. Interacts with PMEL; this allows the loading of PMEL luminal fragment on ILVs to induce fibril nucleation. Post-translationally, APOE exists as multiple glycosylated and sialylated glycoforms within cells and in plasma. The extent of glycosylation and sialylation are tissue and context specific. In terms of processing, glycated in plasma VLDL. Phosphorylated by FAM20C in the extracellular medium.

The protein localises to the secreted. It localises to the extracellular space. Its subcellular location is the extracellular matrix. It is found in the extracellular vesicle. The protein resides in the endosome. The protein localises to the multivesicular body. Functionally, APOE is an apolipoprotein, a protein associating with lipid particles, that mainly functions in lipoprotein-mediated lipid transport between organs via the plasma and interstitial fluids. APOE is a core component of plasma lipoproteins and is involved in their production, conversion and clearance. Apolipoproteins are amphipathic molecules that interact both with lipids of the lipoprotein particle core and the aqueous environment of the plasma. As such, APOE associates with chylomicrons, chylomicron remnants, very low density lipoproteins (VLDL) and intermediate density lipoproteins (IDL) but shows a preferential binding to high-density lipoproteins (HDL). It also binds a wide range of cellular receptors including the LDL receptor/LDLR and the very low-density lipoprotein receptor/VLDLR that mediate the cellular uptake of the APOE-containing lipoprotein particles. Finally, APOE also has a heparin-binding activity and binds heparan-sulfate proteoglycans on the surface of cells, a property that supports the capture and the receptor-mediated uptake of APOE-containing lipoproteins by cells. The protein is Apolipoprotein E (APOE) of Ovis aries (Sheep).